Consider the following 1482-residue polypeptide: Chromosome partition protein MukB (1482 aa).

34–41 (GGNGAGKS) contacts ATP. Coiled coils occupy residues 326-416 (LEAD…AIQY), 509-603 (RHLA…RAPV), 780-805 (RAAR…ATLS), 835-923 (EAEI…AKLE), 979-1116 (LSGN…AKAG), and 1210-1265 (EAIE…LQSV). Residues 666–783 (PGGAEDSRLN…TLPLFGRAAR (118 aa)) are flexible hinge.

Belongs to the SMC family. MukB subfamily. Homodimerization via its hinge domain. Binds to DNA via its C-terminal region. Interacts, and probably forms a ternary complex, with MukE and MukF via its C-terminal region. The complex formation is stimulated by calcium or magnesium. Interacts with tubulin-related protein FtsZ.

The protein localises to the cytoplasm. Its subcellular location is the nucleoid. Plays a central role in chromosome condensation, segregation and cell cycle progression. Functions as a homodimer, which is essential for chromosome partition. Involved in negative DNA supercoiling in vivo, and by this means organize and compact chromosomes. May achieve or facilitate chromosome segregation by condensation DNA from both sides of a centrally located replisome during cell division. This is Chromosome partition protein MukB from Enterobacter sp. (strain 638).